A 367-amino-acid polypeptide reads, in one-letter code: N-acetylmuramoyl-L-alanine amidase BlyA (367 aa).

Positions 24–158 (VKKCVLHYTA…DITHKNCPAP (135 aa)) constitute an N-acetylmuramoyl-L-alanine amidase domain. A disordered region spans residues 178–204 (SGKSVSKASPTKPTTSSPSSSSAVSGS). Positions 180 to 204 (KSVSKASPTKPTTSSPSSSSAVSGS) are enriched in low complexity. 2 consecutive SH3b domains span residues 202–271 (SGSL…YVDV) and 298–367 (GKIK…GSTI).

Belongs to the N-acetylmuramoyl-L-alanine amidase 2 family.

Its subcellular location is the secreted. It carries out the reaction Hydrolyzes the link between N-acetylmuramoyl residues and L-amino acid residues in certain cell-wall glycopeptides.. Autolysins are involved in some important biological processes such as cell separation, cell-wall turnover, competence for genetic transformation, formation of the flagella and sporulation. Involved in prophage SP-beta-mediated cell lysis. This is N-acetylmuramoyl-L-alanine amidase BlyA (blyA) from Bacillus subtilis (strain 168).